A 289-amino-acid chain; its full sequence is Acetyl-coenzyme A carboxylase carboxyl transferase subunit beta (289 aa).

One can recognise a CoA carboxyltransferase N-terminal domain in the interval 34–289 (MWVKCNKCGE…KLINMHKNSF (256 aa)). Residues cysteine 38, cysteine 41, cysteine 57, and cysteine 60 each coordinate Zn(2+). Residues 38-60 (CNKCGEILYQNDLEKNYMACNLC) form a C4-type zinc finger.

It belongs to the AccD/PCCB family. As to quaternary structure, acetyl-CoA carboxylase is a heterohexamer composed of biotin carboxyl carrier protein (AccB), biotin carboxylase (AccC) and two subunits each of ACCase subunit alpha (AccA) and ACCase subunit beta (AccD). Zn(2+) serves as cofactor.

The protein localises to the cytoplasm. The catalysed reaction is N(6)-carboxybiotinyl-L-lysyl-[protein] + acetyl-CoA = N(6)-biotinyl-L-lysyl-[protein] + malonyl-CoA. Its pathway is lipid metabolism; malonyl-CoA biosynthesis; malonyl-CoA from acetyl-CoA: step 1/1. In terms of biological role, component of the acetyl coenzyme A carboxylase (ACC) complex. Biotin carboxylase (BC) catalyzes the carboxylation of biotin on its carrier protein (BCCP) and then the CO(2) group is transferred by the transcarboxylase to acetyl-CoA to form malonyl-CoA. This chain is Acetyl-coenzyme A carboxylase carboxyl transferase subunit beta, found in Clostridium botulinum (strain Loch Maree / Type A3).